The chain runs to 246 residues: Protein YIPF4 (246 aa).

The Cytoplasmic portion of the chain corresponds to 1–115 (MQPPGPPPAY…FNRQVVRDNP (115 aa)). A helical membrane pass occupies residues 116 to 136 (DFWGPLAVVLFFSMISLYGQF). Over 137 to 140 (RVVS) the chain is Lumenal. Residues 141-161 (WIITIWIFGSLTIFLLARVLG) traverse the membrane as a helical segment. Over 162-168 (GEVAYGQ) the chain is Cytoplasmic. The chain crosses the membrane as a helical span at residues 169–189 (VLGVIGYSLLPLIVIAPILLV). Residues 190–197 (VGSFEMVS) are Lumenal-facing. The chain crosses the membrane as a helical span at residues 198–218 (TLIKLFGVFWAAYSAASLLVG). The Cytoplasmic portion of the chain corresponds to 219–225 (EEFKTKK). Residues 226–246 (PLLIYPIFLLYIYFLSLYTGV) form a helical membrane-spanning segment.

It belongs to the YIP1 family. Interacts with YIPF3 and YIPF5.

It localises to the golgi apparatus. Its subcellular location is the cis-Golgi network membrane. Functionally, involved in the maintenance of the Golgi structure. The sequence is that of Protein YIPF4 (Yipf4) from Mus musculus (Mouse).